Consider the following 278-residue polypeptide: MAIRKYKPTTPGRRGASVADFVEVTRSTPEKSLVRPLHSKGGRNNAGRITVRHQGGGHKRAYRIVDFRRHDKDGVPAKVAHIEYDPNRSARIALLHYADGEKRYILAPRNLQQGDRVENGPGADIKPGNNLALRNIPVGTTIHAIELRPGGGAKFARSAGASVQLLAKEGAYAHLRMPSGEIRLVNVRCRATIGEVGNAEQSNINWGKAGRKRWLGVRPTVRGVVMNPVDHPHGGGEGRTSGGRHPVSPWGKPTGRTRSNKKASNKYIVRRRTKNKKR.

Disordered stretches follow at residues 29–55 (PEKS…RHQG) and 225–278 (VMNP…NKKR). Over residues 258-278 (RSNKKASNKYIVRRRTKNKKR) the composition is skewed to basic residues.

It belongs to the universal ribosomal protein uL2 family. As to quaternary structure, part of the 50S ribosomal subunit. Forms a bridge to the 30S subunit in the 70S ribosome. Post-translationally, the N-terminus is blocked. In terms of processing, phosphorylated on serine and threonine residues.

In terms of biological role, one of the primary rRNA binding proteins. Required for association of the 30S and 50S subunits to form the 70S ribosome, for tRNA binding and peptide bond formation. It has been suggested to have peptidyltransferase activity; this is somewhat controversial. Makes several contacts with the 16S rRNA in the 70S ribosome. The polypeptide is Large ribosomal subunit protein uL2 (Streptomyces collinus).